The following is a 179-amino-acid chain: Large ribosomal subunit protein uL6 (179 aa).

The protein belongs to the universal ribosomal protein uL6 family. As to quaternary structure, part of the 50S ribosomal subunit.

In terms of biological role, this protein binds to the 23S rRNA, and is important in its secondary structure. It is located near the subunit interface in the base of the L7/L12 stalk, and near the tRNA binding site of the peptidyltransferase center. The polypeptide is Large ribosomal subunit protein uL6 (Bacillus subtilis (strain 168)).